Reading from the N-terminus, the 491-residue chain is tRNA-2-methylthio-N(6)-dimethylallyladenosine synthase (491 aa).

In terms of domain architecture, MTTase N-terminal spans 3-119 (RSYQIRTYGC…LPTLLERARH (117 aa)). 6 residues coordinate [4Fe-4S] cluster: cysteine 12, cysteine 48, cysteine 82, cysteine 156, cysteine 160, and cysteine 163. A Radical SAM core domain is found at 142 to 372 (RESAYSGWVS…IELQNQISWD (231 aa)). Residues 375 to 446 (KELVGRSVEL…PHHLVADSEI (72 aa)) form the TRAM domain.

It belongs to the methylthiotransferase family. MiaB subfamily. In terms of assembly, monomer. Requires [4Fe-4S] cluster as cofactor.

The protein resides in the cytoplasm. The catalysed reaction is N(6)-dimethylallyladenosine(37) in tRNA + (sulfur carrier)-SH + AH2 + 2 S-adenosyl-L-methionine = 2-methylsulfanyl-N(6)-dimethylallyladenosine(37) in tRNA + (sulfur carrier)-H + 5'-deoxyadenosine + L-methionine + A + S-adenosyl-L-homocysteine + 2 H(+). In terms of biological role, catalyzes the methylthiolation of N6-(dimethylallyl)adenosine (i(6)A), leading to the formation of 2-methylthio-N6-(dimethylallyl)adenosine (ms(2)i(6)A) at position 37 in tRNAs that read codons beginning with uridine. The chain is tRNA-2-methylthio-N(6)-dimethylallyladenosine synthase from Saccharopolyspora erythraea (strain ATCC 11635 / DSM 40517 / JCM 4748 / NBRC 13426 / NCIMB 8594 / NRRL 2338).